The primary structure comprises 261 residues: MPQNEYIERWQKQHGKRLDHEERTRKRIARESHKQSQDAQTLRGLRAKLYHKKRHAEKIQMRKRIKAQEERDVKSAAPNEPSTTPLPQYLLDRSQATNAKALSSAIKEKRAEKAAKFSVPLPKVKGISEEEMFKVVKTGKKTSKKSWKRMITKPTFVGNDFTRRPVKYERFIRPMGLRYKKANVTHPELGVTVQLPIISVKKNPQSPMYTQLGVLTKGTIIEVNVSELGLVTAGGKVVWGKWAQITNNCENDGCVNAVLLV.

A compositionally biased stretch (basic and acidic residues) spans 1-36 (MPQNEYIERWQKQHGKRLDHEERTRKRIARESHKQS). The disordered stretch occupies residues 1-87 (MPQNEYIERW…PNEPSTTPLP (87 aa)). 2 short sequence motifs (nuclear localization signal) span residues 15–22 (GKRLDHEE) and 51–58 (HKKRHAEK). Basic residues predominate over residues 45–65 (LRAKLYHKKRHAEKIQMRKRI).

It belongs to the eukaryotic ribosomal protein eS8 family. Ribosome biogenesis protein NSA2 subfamily. In terms of assembly, component of the pre-66S ribosomal particle. Interacts with NOP7 and RRP1. Interacts with RSA4 (via WD repeats).

Its subcellular location is the nucleus. It is found in the nucleolus. In terms of biological role, involved in the biogenesis of the 60S ribosomal subunit. May play a part in the quality control of pre-60S particles. The chain is Ribosome biogenesis protein NSA2 (NSA2) from Coccidioides immitis (strain RS) (Valley fever fungus).